The sequence spans 947 residues: Bifunctional glutamine synthetase adenylyltransferase/adenylyl-removing enzyme (947 aa).

The adenylyl removase stretch occupies residues 1 to 440 (MTPLSSPLSQ…VFNELIGDDE (440 aa)). The tract at residues 450–947 (SEPWRDVWQD…ASWRKWLVAV (498 aa)) is adenylyl transferase.

It belongs to the GlnE family. Requires Mg(2+) as cofactor.

The catalysed reaction is [glutamine synthetase]-O(4)-(5'-adenylyl)-L-tyrosine + phosphate = [glutamine synthetase]-L-tyrosine + ADP. It catalyses the reaction [glutamine synthetase]-L-tyrosine + ATP = [glutamine synthetase]-O(4)-(5'-adenylyl)-L-tyrosine + diphosphate. Functionally, involved in the regulation of glutamine synthetase GlnA, a key enzyme in the process to assimilate ammonia. When cellular nitrogen levels are high, the C-terminal adenylyl transferase (AT) inactivates GlnA by covalent transfer of an adenylyl group from ATP to specific tyrosine residue of GlnA, thus reducing its activity. Conversely, when nitrogen levels are low, the N-terminal adenylyl removase (AR) activates GlnA by removing the adenylyl group by phosphorolysis, increasing its activity. The regulatory region of GlnE binds the signal transduction protein PII (GlnB) which indicates the nitrogen status of the cell. The protein is Bifunctional glutamine synthetase adenylyltransferase/adenylyl-removing enzyme of Salmonella dublin (strain CT_02021853).